Consider the following 308-residue polypeptide: Aspartate carbamoyltransferase catalytic subunit (308 aa).

Carbamoyl phosphate contacts are provided by arginine 58 and threonine 59. Lysine 86 is an L-aspartate binding site. Residues arginine 108, histidine 136, and glutamine 139 each contribute to the carbamoyl phosphate site. 2 residues coordinate L-aspartate: arginine 169 and arginine 222. Residues glycine 264 and proline 265 each contribute to the carbamoyl phosphate site.

The protein belongs to the aspartate/ornithine carbamoyltransferase superfamily. ATCase family. As to quaternary structure, heterododecamer (2C3:3R2) of six catalytic PyrB chains organized as two trimers (C3), and six regulatory PyrI chains organized as three dimers (R2).

The catalysed reaction is carbamoyl phosphate + L-aspartate = N-carbamoyl-L-aspartate + phosphate + H(+). It participates in pyrimidine metabolism; UMP biosynthesis via de novo pathway; (S)-dihydroorotate from bicarbonate: step 2/3. Catalyzes the condensation of carbamoyl phosphate and aspartate to form carbamoyl aspartate and inorganic phosphate, the committed step in the de novo pyrimidine nucleotide biosynthesis pathway. This chain is Aspartate carbamoyltransferase catalytic subunit, found in Campylobacter hominis (strain ATCC BAA-381 / DSM 21671 / CCUG 45161 / LMG 19568 / NCTC 13146 / CH001A).